The primary structure comprises 233 residues: Glutathione S-transferase 2 (233 aa).

A GST N-terminal domain is found at 17–101 (QKMIIYDTPA…YIDALDGTPT (85 aa)). Residues Tyr-29, His-58, Val-72, 85 to 86 (EC), and His-133 contribute to the glutathione site. The GST C-terminal domain occupies 106–233 (TPLEKGVIHM…KLLEIRSKSS (128 aa)).

The protein belongs to the GST superfamily. In terms of assembly, homodimer.

It catalyses the reaction RX + glutathione = an S-substituted glutathione + a halide anion + H(+). The chain is Glutathione S-transferase 2 (GTT2) from Saccharomyces cerevisiae (strain ATCC 204508 / S288c) (Baker's yeast).